A 278-amino-acid polypeptide reads, in one-letter code: Ribosomal RNA small subunit methyltransferase A (278 aa).

Positions 27, 29, 54, 75, 95, and 118 each coordinate S-adenosyl-L-methionine.

The protein belongs to the class I-like SAM-binding methyltransferase superfamily. rRNA adenine N(6)-methyltransferase family. RsmA subfamily.

It localises to the cytoplasm. The enzyme catalyses adenosine(1518)/adenosine(1519) in 16S rRNA + 4 S-adenosyl-L-methionine = N(6)-dimethyladenosine(1518)/N(6)-dimethyladenosine(1519) in 16S rRNA + 4 S-adenosyl-L-homocysteine + 4 H(+). In terms of biological role, specifically dimethylates two adjacent adenosines (A1518 and A1519) in the loop of a conserved hairpin near the 3'-end of 16S rRNA in the 30S particle. May play a critical role in biogenesis of 30S subunits. The chain is Ribosomal RNA small subunit methyltransferase A from Chlamydia caviae (strain ATCC VR-813 / DSM 19441 / 03DC25 / GPIC) (Chlamydophila caviae).